A 968-amino-acid chain; its full sequence is MKKFFDSRREQGGSGLGSGSSGGGGSTSGLGSGYIGRVFGIGRQQVTVDEVLAEGGFAIVFLVRTSNGMKCALKRMFVNNEHDLQVCKREIQIMRDLSGHKNIVGYIDSSINNVSSGDVWEVLILMDFCRGGQVVNLMNQRLQTGFTESEVLQIFCDTCEAVARLHQCKTPIIHRDLKVENILLHDRGHYVLCDFGSATNKFQNPQTEGVNAVEDEIKKYTTLSYRAPEMVNLYSGKIITTKADIWALGCLLYKLCYFTLPFGESQVAICDGNFTIPDNSRYSQDMHCLIRYMLEPDPDKRPDIYQVSFFSFKLLKKECPVPNVQNSPIPAKLPEPVKASEAAAKKTQPKARLTDPIPTTETSIAPRQRPKAGQTQPNPGILPIQPALTPRKRAMVQPPPQVAGSSNQPGLLASVPQPKTQAPPSQPLPQSQAKQPQAPPAPQQPPSAPAQGLPAQAQATPQHQQQLFLKQQPQPPQPQPQAQAPPVKSLKFYPFYPMCKGRQTVSSQFQAVHPAAQQPAIAQFPAVSQGSSQQQLIQNFYQQQQQQQQQQQLATTLHQQQLLTQQAALQQKTTVAAIQPPQAQPATASQPPPAQEPAQIQAPVRQQPKVQTTPPPAIQGQKLGSLTPPSSPKAQRAGHRRILSDVTHSAVFGVPASKSTQLLQAAAAEASLNKSKSATTTPSGSPRASQQNVYNPSEGSTWNPFDDDNFSKLTAEELLNKDFAKLGEGKHPEKLGGSAESLIPGFQPTQGDAFAASSFAAGTAEKRKGGQAVDSSLPLLSVSDPFIPLQVPDAPEKLIEGLKSPDTSLLLPDLLPMTDPFGSTSDAVIEKADVAVESLIPGLEPPVPQRLPSQTESVASNRTDSLTGEDALIDCSLLSNPTTDLLEEFAPIAISAPAHKAAEDSNLISGFDVPEGSDKVAEDEFDPIPVLITKNPQGGHSRNSSGSSESSLPNLARSLLLVDQLIDL.

An N-acetylmethionine modification is found at Met1. Residues Met1–Gln11 show a composition bias toward basic and acidic residues. Residues Met1 to Gly25 are disordered. The segment covering Gly12–Gly25 has biased composition (gly residues). Phosphoserine is present on Ser14. A Protein kinase domain is found at Val46 to Leu315. ATP is bound by residues Leu52 to Val60 and Lys74. The active-site Proton acceptor is the Asp176. At Tyr234 the chain carries Phosphotyrosine. Ser235 is subject to Phosphoserine. Disordered regions lie at residues Ser327–Pro485 and Ile578–Arg640. Phosphothreonine occurs at positions 354 and 389. Arg391 carries the omega-N-methylarginine modification. Pro residues predominate over residues Gln437–Ala448. Composition is skewed to low complexity over residues Pro449–Gln472 and Ile578–Ser589. Thr613 carries the phosphothreonine modification. The residue at position 625 (Ser625) is a Phosphoserine. Position 627 is a phosphothreonine (Thr627). A phosphoserine mark is found at Ser630, Ser631, Ser644, and Ser657. Phosphothreonine is present on Thr660. The disordered stretch occupies residues Ser671–Asp708. Positions Thr679–Asn703 are enriched in polar residues. Tyr694 carries the phosphotyrosine modification. Phosphoserine is present on residues Ser738, Ser853, Ser944, and Ser945. The segment at Glu830–Asp967 is clathrin-binding domain (CBD). Disordered regions lie at residues Leu843 to Arg862 and Pro929 to Leu952. The segment covering Leu851–Arg862 has biased composition (polar residues). Residues Gly938–Ser951 are compositionally biased toward low complexity.

The protein belongs to the protein kinase superfamily. Ser/Thr protein kinase family. In terms of assembly, interacts (via CBD domain) with clathrin. Interacts with AP-2 complex. Interacts with NUMB. Interacts with alpha-adaptin. Interacts with EPS15. Interacts with membrane-bound activated NOTCH1 but not with the inactive full-length form of NOTCH1. Preferentially interacts with monoubiquitinated activated NOTCH1 compared to the non-ubiquitinated form. Post-translationally, autophosphorylated.

It is found in the cell membrane. The protein resides in the membrane. The protein localises to the clathrin-coated pit. It localises to the presynapse. The catalysed reaction is L-seryl-[protein] + ATP = O-phospho-L-seryl-[protein] + ADP + H(+). It catalyses the reaction L-threonyl-[protein] + ATP = O-phospho-L-threonyl-[protein] + ADP + H(+). Stimulated by clathrin. Its function is as follows. Regulates clathrin-mediated endocytosis by phosphorylating the AP2M1/mu2 subunit of the adaptor protein complex 2 (AP-2) which ensures high affinity binding of AP-2 to cargo membrane proteins during the initial stages of endocytosis. Preferentially, may phosphorylate substrates on threonine residues. Regulates phosphorylation of other AP-2 subunits as well as AP-2 localization and AP-2-mediated internalization of ligand complexes. Phosphorylates NUMB and regulates its cellular localization, promoting NUMB localization to endosomes. Binds to and stabilizes the activated form of NOTCH1, increases its localization in endosomes and regulates its transcriptional activity. The protein is AP2-associated protein kinase 1 (AAK1) of Sus scrofa (Pig).